Reading from the N-terminus, the 625-residue chain is tRNA uridine 5-carboxymethylaminomethyl modification enzyme MnmG (625 aa).

Residues 16-21 (GGGHAG), I128, and S183 contribute to the FAD site. 275-289 (GPRYCPSIEDKVVRF) contacts NAD(+). Q372 serves as a coordination point for FAD.

This sequence belongs to the MnmG family. In terms of assembly, homodimer. Heterotetramer of two MnmE and two MnmG subunits. FAD serves as cofactor.

Its subcellular location is the cytoplasm. In terms of biological role, NAD-binding protein involved in the addition of a carboxymethylaminomethyl (cmnm) group at the wobble position (U34) of certain tRNAs, forming tRNA-cmnm(5)s(2)U34. The polypeptide is tRNA uridine 5-carboxymethylaminomethyl modification enzyme MnmG (Protochlamydia amoebophila (strain UWE25)).